The primary structure comprises 118 residues: Ribosome-binding factor A (118 aa).

It belongs to the RbfA family. As to quaternary structure, monomer. Binds 30S ribosomal subunits, but not 50S ribosomal subunits or 70S ribosomes.

It localises to the cytoplasm. Its function is as follows. One of several proteins that assist in the late maturation steps of the functional core of the 30S ribosomal subunit. Associates with free 30S ribosomal subunits (but not with 30S subunits that are part of 70S ribosomes or polysomes). Required for efficient processing of 16S rRNA. May interact with the 5'-terminal helix region of 16S rRNA. This chain is Ribosome-binding factor A, found in Dehalococcoides mccartyi (strain ATCC BAA-2100 / JCM 16839 / KCTC 5957 / BAV1).